The sequence spans 332 residues: Ribosomal RNA small subunit methyltransferase H (332 aa).

S-adenosyl-L-methionine contacts are provided by residues 34–36 (GGH), Asp59, Phe86, Asp112, and Gln119.

It belongs to the methyltransferase superfamily. RsmH family.

Its subcellular location is the cytoplasm. The enzyme catalyses cytidine(1402) in 16S rRNA + S-adenosyl-L-methionine = N(4)-methylcytidine(1402) in 16S rRNA + S-adenosyl-L-homocysteine + H(+). In terms of biological role, specifically methylates the N4 position of cytidine in position 1402 (C1402) of 16S rRNA. This is Ribosomal RNA small subunit methyltransferase H from Chlorobium phaeobacteroides (strain BS1).